The following is a 342-amino-acid chain: Anthranilate phosphoribosyltransferase (342 aa).

5-phospho-alpha-D-ribose 1-diphosphate contacts are provided by residues G81, 84 to 85 (GD), T89, 91 to 94 (NIST), 109 to 117 (KHGNRALSS), and T121. G81 is an anthranilate binding site. S93 serves as a coordination point for Mg(2+). N112 provides a ligand contact to anthranilate. R167 contributes to the anthranilate binding site. Residues D225 and E226 each coordinate Mg(2+).

It belongs to the anthranilate phosphoribosyltransferase family. In terms of assembly, homodimer. Mg(2+) serves as cofactor.

It carries out the reaction N-(5-phospho-beta-D-ribosyl)anthranilate + diphosphate = 5-phospho-alpha-D-ribose 1-diphosphate + anthranilate. It participates in amino-acid biosynthesis; L-tryptophan biosynthesis; L-tryptophan from chorismate: step 2/5. Its function is as follows. Catalyzes the transfer of the phosphoribosyl group of 5-phosphorylribose-1-pyrophosphate (PRPP) to anthranilate to yield N-(5'-phosphoribosyl)-anthranilate (PRA). The protein is Anthranilate phosphoribosyltransferase of Agrobacterium fabrum (strain C58 / ATCC 33970) (Agrobacterium tumefaciens (strain C58)).